Consider the following 612-residue polypeptide: Peroxisomal carnitine O-octanoyltransferase (612 aa).

An N-acetylmethionine modification is found at methionine 1. N6-succinyllysine occurs at positions 40 and 57. Histidine 327 serves as the catalytic Proton acceptor. CoA is bound by residues lysine 406 and 410 to 417; that span reads KNKMLHPD. Lysine 406 is modified (N6-acetyllysine; alternate). Lysine 406 is modified (N6-succinyllysine; alternate). Tyrosine 439, threonine 441, and threonine 452 together coordinate (R)-carnitine. The short motif at 610–612 is the Microbody targeting signal element; sequence THL.

The protein belongs to the carnitine/choline acetyltransferase family. Monomer.

The protein localises to the peroxisome. It catalyses the reaction octanoyl-CoA + (R)-carnitine = O-octanoyl-(R)-carnitine + CoA. The catalysed reaction is 4,8-dimethylnonanoyl-CoA + (R)-carnitine = O-4,8-dimethylnonanoyl-(R)-carnitine + CoA. Its pathway is lipid metabolism; fatty acid beta-oxidation. Its function is as follows. Beta-oxidation of fatty acids. The highest activity concerns the C6 to C10 chain length substrate. Converts the end product of pristanic acid beta oxidation, 4,8-dimethylnonanoyl-CoA, to its corresponding carnitine ester. This chain is Peroxisomal carnitine O-octanoyltransferase (CROT), found in Homo sapiens (Human).